The sequence spans 578 residues: Nuclear receptor subfamily 1 group D member 2 (578 aa).

The tract at residues 1–60 is required for phosphorylation by CSNK1E and cytoplasmic localization; the sequence is MELNAGGVIAYISSSSSASSPASCHSEGSENSFQSSSSSVPSSPNSSNCDANGNPKNTDV. Residues 1 to 99 are modulating; that stretch reads MELNAGGVIA…HSGMTKFSGM (99 aa). Positions 13-47 are enriched in low complexity; sequence SSSSSASSPASCHSEGSENSFQSSSSSVPSSPNSS. A disordered region spans residues 13–89; it reads SSSSSASSPA…KPGAPGMTKS (77 aa). Phosphoserine; by GSK3-beta is present on Ser46. A compositionally biased stretch (polar residues) spans 48–61; the sequence is NCDANGNPKNTDVS. A DNA-binding region (nuclear receptor) is located at residues 100–176; that stretch reads VLLCKVCGDV…VGMSRDAVRF (77 aa). 2 consecutive NR C4-type zinc fingers follow at residues 103 to 123 and 140 to 164; these read CKVCGDVASGFHYGVHACEGC and CLKNENCSIMRMNRNRCQQCRFKKC. Residues Lys162 and Lys163 each carry the N6-acetyllysine; by KAT5 modification. A disordered region spans residues 214–247; that stretch reads EPHEQSVPPAQEQLRPKPQLEQENIKSTPPPSDF. The segment covering 227 to 237 has biased composition (basic and acidic residues); sequence LRPKPQLEQEN. 2 disulfide bridges follow: Cys336–Cys342 and Cys373–Cys383. One can recognise an NR LBD domain in the interval 368–578; sequence RNSYLCSTGG…EELLAFKVHP (211 aa). Residues Cys383 and His567 each contribute to the heme site. The interval 396–578 is interaction with ZNHIT1; sequence SGHEIWEEFS…EELLAFKVHP (183 aa).

This sequence belongs to the nuclear hormone receptor family. NR1 subfamily. In terms of assembly, binds DNA as a monomer or a homodimer. Interacts with NCOA5 coactivator, leading to a strong increase of transcription of target genes. Interacts (via N-terminus) with KAT5. Interacts (via C-terminus) with HDAC1. Interacts with ZNHIT1. Interacts with SIAH2. Post-translationally, deacetylated by HDAC1. Acetylation and deacetylation regulate its transcriptional regulatory activity. In terms of processing, under more reducing intracellular redox conditions, Cys-383 is in its heme-bound state, which is optimal for recruitment of the NCOR1/HDAC3 corepressor complex and repression of target genes. When subjected to oxidative stress conditions, Cys-383 undergoes oxidation to form a disulfide bridge with Cys-373, also triggering a ligand switch that results in release of bound heme and derepression of target genes. Ubiquitinated by SIAH2; leading to its proteasomal degradation. Post-translationally, phosphorylated by CSNK1E; phosphorylation enhances its cytoplasmic localization.

The protein localises to the nucleus. Its subcellular location is the cytoplasm. The heme-bound form can bind gaseous signaling molecules such as CO and nitric oxide (NO) and NO can reverse its transcriptional repressor activity. Transcriptional repressor which coordinates circadian rhythm and metabolic pathways in a heme-dependent manner. Integral component of the complex transcription machinery that governs circadian rhythmicity and forms a critical negative limb of the circadian clock by directly repressing the expression of core clock components BMAL1 and CLOCK. Also regulates genes involved in metabolic functions, including lipid metabolism and the inflammatory response. Acts as a receptor for heme which stimulates its interaction with the NCOR1/HDAC3 corepressor complex, enhancing transcriptional repression. Recognizes two classes of DNA response elements within the promoter of its target genes and can bind to DNA as either monomers or homodimers, depending on the nature of the response element. Binds as a monomer to a response element composed of the consensus half-site motif 5'-[A/G]GGTCA-3' preceded by an A/T-rich 5' sequence (RevRE), or as a homodimer to a direct repeat of the core motif spaced by two nuclegotides (RevDR-2). Acts as a potent competitive repressor of ROR alpha (RORA) function and also negatively regulates the expression of NR1D1. Regulates lipid and energy homeostasis in the skeletal muscle via repression of genes involved in lipid metabolism and myogenesis including: CD36, FABP3, FABP4, UCP3, SCD1 and MSTN. Regulates hepatic lipid metabolism via the repression of APOC3. Represses gene expression at a distance in macrophages by inhibiting the transcription of enhancer-derived RNAs (eRNAs). In addition to its activity as a repressor, can also act as a transcriptional activator. Acts as a transcriptional activator of the sterol regulatory element-binding protein 1 (SREBF1) and the inflammatory mediator interleukin-6 (IL6) in the skeletal muscle. Plays a role in the regulation of circadian sleep/wake cycle; essential for maintaining wakefulness during the dark phase or active period. Key regulator of skeletal muscle mitochondrial function; negatively regulates the skeletal muscle expression of core clock genes and genes involved in mitochondrial biogenesis, fatty acid beta-oxidation and lipid metabolism. May play a role in the circadian control of neutrophilic inflammation in the lung. The sequence is that of Nuclear receptor subfamily 1 group D member 2 from Rattus norvegicus (Rat).